We begin with the raw amino-acid sequence, 344 residues long: Aspartate-semialdehyde dehydrogenase (344 aa).

Residues 10–13 (TGQV) and 38–39 (RS) each bind NADP(+). Position 101 (Arg-101) interacts with phosphate. Residue Cys-131 is the Acyl-thioester intermediate of the active site. Gln-158 is a binding site for substrate. 161–162 (SG) serves as a coordination point for NADP(+). Lys-228 lines the phosphate pocket. Arg-250 contacts substrate. His-257 acts as the Proton acceptor in catalysis. Asn-326 is a binding site for NADP(+).

Belongs to the aspartate-semialdehyde dehydrogenase family. As to quaternary structure, homodimer.

It carries out the reaction L-aspartate 4-semialdehyde + phosphate + NADP(+) = 4-phospho-L-aspartate + NADPH + H(+). Its pathway is amino-acid biosynthesis; L-lysine biosynthesis via DAP pathway; (S)-tetrahydrodipicolinate from L-aspartate: step 2/4. The protein operates within amino-acid biosynthesis; L-methionine biosynthesis via de novo pathway; L-homoserine from L-aspartate: step 2/3. It functions in the pathway amino-acid biosynthesis; L-threonine biosynthesis; L-threonine from L-aspartate: step 2/5. In terms of biological role, catalyzes the NADPH-dependent formation of L-aspartate-semialdehyde (L-ASA) by the reductive dephosphorylation of L-aspartyl-4-phosphate. The polypeptide is Aspartate-semialdehyde dehydrogenase (Corynebacterium melassecola).